The chain runs to 95 residues: uncharacterized protein (95 aa).

A helical membrane pass occupies residues 3-23 (FVIIIAILLLGISLILAFTVL).

It localises to the membrane. This is an uncharacterized protein from Methanocaldococcus jannaschii (strain ATCC 43067 / DSM 2661 / JAL-1 / JCM 10045 / NBRC 100440) (Methanococcus jannaschii).